A 347-amino-acid chain; its full sequence is NADH-ubiquinone oxidoreductase chain 2 (347 aa).

Helical transmembrane passes span 3–23 (PIILIIILMTVMLGTIIVMIS), 25–45 (HWLLIWIGFEMNMLAIIPIMM), 67–87 (SMLLMMAIIINLMFSGQWTVM), 96–116 (MLMTMALAMKLGMAPFHFWVP), 122–142 (IPLSSGLILLTWQKLAPMSVL), 145–165 (ILPSINLDLILTLSILSITIG), 178–198 (IMAYSSIAHMGWMTAVLLYNP), 200–220 (MTLLNLIIYIIMTSTMFTLFM), 237–257 (APIMTILVLITLLSMGGLPPL), 274–294 (DSIILPTLMAITALLNLYFYM), and 325–345 (LLPTMTVLSTMLLPLTPILSI).

Belongs to the complex I subunit 2 family. Core subunit of respiratory chain NADH dehydrogenase (Complex I) which is composed of 45 different subunits. Interacts with TMEM242.

The protein localises to the mitochondrion inner membrane. The enzyme catalyses a ubiquinone + NADH + 5 H(+)(in) = a ubiquinol + NAD(+) + 4 H(+)(out). Core subunit of the mitochondrial membrane respiratory chain NADH dehydrogenase (Complex I) which catalyzes electron transfer from NADH through the respiratory chain, using ubiquinone as an electron acceptor. Essential for the catalytic activity and assembly of complex I. This chain is NADH-ubiquinone oxidoreductase chain 2, found in Ovis aries (Sheep).